Consider the following 137-residue polypeptide: Large ribosomal subunit protein uL16c (137 aa).

Belongs to the universal ribosomal protein uL16 family. Part of the 50S ribosomal subunit.

Its subcellular location is the plastid. It is found in the chloroplast. This is Large ribosomal subunit protein uL16c from Bigelowiella natans (Pedinomonas minutissima).